We begin with the raw amino-acid sequence, 358 residues long: DNA replication and repair protein RecF (358 aa).

33-40 serves as a coordination point for ATP; the sequence is GENGAGKT.

This sequence belongs to the RecF family.

The protein localises to the cytoplasm. The RecF protein is involved in DNA metabolism; it is required for DNA replication and normal SOS inducibility. RecF binds preferentially to single-stranded, linear DNA. It also seems to bind ATP. The polypeptide is DNA replication and repair protein RecF (Deinococcus geothermalis (strain DSM 11300 / CIP 105573 / AG-3a)).